Reading from the N-terminus, the 293-residue chain is Protease HtpX homolog (293 aa).

The next 2 membrane-spanning stretches (helical) occupy residues 4-24 and 40-60; these read IFLF…TLRV and SLLI…LLIS. His-146 is a binding site for Zn(2+). Glu-147 is an active-site residue. Position 150 (His-150) interacts with Zn(2+). 2 helical membrane passes run 161-181 and 197-217; these read LIQG…GYFI and FITV…IVAW. A Zn(2+)-binding site is contributed by Glu-223.

This sequence belongs to the peptidase M48B family. Zn(2+) is required as a cofactor.

It is found in the cell inner membrane. This chain is Protease HtpX homolog, found in Bordetella petrii (strain ATCC BAA-461 / DSM 12804 / CCUG 43448).